Consider the following 214-residue polypeptide: Clavatol biosynthesis cluster protein B (214 aa).

The first 17 residues, 1-17, serve as a signal peptide directing secretion; sequence MAALSFQCLCVASAVRA. N-linked (GlcNAc...) asparagine glycans are attached at residues N103 and N204.

It functions in the pathway secondary metabolite biosynthesis. Functionally, part of the cla gene cluster that produces clavatol and ortho-quinone methide. The clavatol biosynthesis cluster cla and the terrestric acid cluster tra are both involved in the production of peniphenones and penilactones. The non-reducing PKS claF is responsible for the formation of clavatol from successive condensations of 3 malonyl-CoA units, presumably with a simple acetyl-CoA starter unit, and 2 methylation steps. The esterase claE probably collaborates with claF by catalyzing the hydrolysis of ACP-bound acyl intermediates to free the ACP from stalled intermediates. The clavatol oxidase claD then converts clavatol to hydroxyclavatol. Spontaneous dehydration of hydroxyclavatol leads to the accumulation of the highly active ortho-quinone methide. On the other hand, the PKS-NRPS hybrid traA is involved in the formation of crustosic acid, with the help of traB and traD. The polyketide synthase module (PKS) of traA is responsible for the synthesis of the polyketide backbone via the condensation of an acetyl-CoA starter unit with 3 malonyl-CoA units. The downstream nonribosomal peptide synthetase (NRPS) module then amidates the carboxyl end of the polyketide with L-malic acid. Because traA lacks a designated enoylreductase (ER) domain, the required activity is provided the enoyl reductase traG. Crustosic acid undergoes decarboxylation and isomerization to the terrestric acid, catalyzed by the 2-oxoglutarate-dependent dioxygenase traH. Both acids are further converted to the 2 gamma-butyrolactones (R)-5-methyltetronic acid and (S)-5-carboxylmethyltetronic acid, with involvement of the cytochrome P450 monooxygenase claJ. Spontaneous addition of the methide to these gamma-butyrolactones leads to peniphenone D and penilactone D, which undergo again stereospecific attacking by methide to give penilactones A and B. The function of claB has not been investigated yet. The chain is Clavatol biosynthesis cluster protein B from Penicillium crustosum (Blue mold fungus).